The chain runs to 345 residues: Phosphoribosylformylglycinamidine cyclo-ligase (345 aa).

The protein belongs to the AIR synthase family.

Its subcellular location is the cytoplasm. It catalyses the reaction 2-formamido-N(1)-(5-O-phospho-beta-D-ribosyl)acetamidine + ATP = 5-amino-1-(5-phospho-beta-D-ribosyl)imidazole + ADP + phosphate + H(+). The protein operates within purine metabolism; IMP biosynthesis via de novo pathway; 5-amino-1-(5-phospho-D-ribosyl)imidazole from N(2)-formyl-N(1)-(5-phospho-D-ribosyl)glycinamide: step 2/2. The chain is Phosphoribosylformylglycinamidine cyclo-ligase from Klebsiella pneumoniae (strain 342).